The following is a 283-amino-acid chain: Dihydropteroate synthase type-1 (283 aa).

Residues 6-262 (VTVFGILNLT…APGDLRSAIT (257 aa)) enclose the Pterin-binding domain. Asn-13 is a binding site for Mg(2+). Residues Asp-86, Asn-105, Asp-177, Lys-216, and 250 to 252 (RTH) contribute to the (7,8-dihydropterin-6-yl)methyl diphosphate site.

Belongs to the DHPS family. As to quaternary structure, homodimer or homotrimer. The cofactor is Mg(2+).

The catalysed reaction is (7,8-dihydropterin-6-yl)methyl diphosphate + 4-aminobenzoate = 7,8-dihydropteroate + diphosphate. The protein operates within cofactor biosynthesis; tetrahydrofolate biosynthesis; 7,8-dihydrofolate from 2-amino-4-hydroxy-6-hydroxymethyl-7,8-dihydropteridine diphosphate and 4-aminobenzoate: step 1/2. Its function is as follows. Catalyzes the condensation of para-aminobenzoate (pABA) with 6-hydroxymethyl-7,8-dihydropterin diphosphate (DHPt-PP) to form 7,8-dihydropteroate (H2Pte), the immediate precursor of folate derivatives. Implicated in resistance to sulfonamide. This chain is Dihydropteroate synthase type-1 (sulI), found in Mycolicibacterium fortuitum (Mycobacterium fortuitum).